The chain runs to 314 residues: MDKIFVDEAVTELRTIGDMLRWAVSRFNDANVYYGHGTDNAWDEAIALVFHALHLPEEIGQQVILSNLTSSEKHKIVELIIRRVRERLPVPYLTNKARFAGLEFYVDERVLVPRSPIAEMIANRFGPWLYGKPVNRILDLCTGSGCIAIACAYEFDEAEVDALDISEDALDVAQVNVETLGVMDRVFPMQSDLFSAIPEGPQYDLIVSNPPYVDEEDIGDMPDEYHHEPAIGLASGRDGLDLTKRILANAAQYLTPTGILVVEVGNSMVHLMEQFPEVPFTWVNFENGGDGVFVLTRDQLIEHQSLFAIYRDAQ.

This sequence belongs to the protein N5-glutamine methyltransferase family. PrmB subfamily.

It catalyses the reaction L-glutaminyl-[ribosomal protein uL3] + S-adenosyl-L-methionine = N(5)-methyl-L-glutaminyl-[ribosomal protein uL3] + S-adenosyl-L-homocysteine + H(+). Methylates large ribosomal subunit protein uL3 on a specific glutamine residue. This chain is Ribosomal protein uL3 glutamine methyltransferase, found in Shewanella oneidensis (strain ATCC 700550 / JCM 31522 / CIP 106686 / LMG 19005 / NCIMB 14063 / MR-1).